The primary structure comprises 92 residues: Small ribosomal subunit protein uS19c (92 aa).

It belongs to the universal ribosomal protein uS19 family.

The protein localises to the plastid. It localises to the chloroplast. In terms of biological role, protein S19 forms a complex with S13 that binds strongly to the 16S ribosomal RNA. This chain is Small ribosomal subunit protein uS19c, found in Coffea arabica (Arabian coffee).